Here is a 152-residue protein sequence, read N- to C-terminus: Cell division protein SepF (152 aa).

The segment at 21-56 (EYIETEQDHPEEHEQQKDKQPAYAQKPQGKQNVVSL) is disordered. A compositionally biased stretch (basic and acidic residues) spans 26–40 (EQDHPEEHEQQKDKQ).

It belongs to the SepF family. In terms of assembly, homodimer. Interacts with FtsZ.

It is found in the cytoplasm. In terms of biological role, cell division protein that is part of the divisome complex and is recruited early to the Z-ring. Probably stimulates Z-ring formation, perhaps through the cross-linking of FtsZ protofilaments. Its function overlaps with FtsA. The polypeptide is Cell division protein SepF (Bacillus velezensis (strain DSM 23117 / BGSC 10A6 / LMG 26770 / FZB42) (Bacillus amyloliquefaciens subsp. plantarum)).